Here is a 65-residue protein sequence, read N- to C-terminus: Large ribosomal subunit protein bL35 (65 aa).

Belongs to the bacterial ribosomal protein bL35 family.

The polypeptide is Large ribosomal subunit protein bL35 (Laribacter hongkongensis (strain HLHK9)).